We begin with the raw amino-acid sequence, 324 residues long: MSVVILGTGSCLPEKIVTNKDLEKIVETNDEWIRTRTGICERRIAGPGEQAYILASRAAKNALDAAGLVAEDLDMIVVGTISAHMVMPSCACMIQQEIGAKKAFAFDVNAACSGFLYAMEVGSKYVATNPAMKVLCIGTETLSARTNQQDRNTSIIFADGAGAAVIGYEEGDRGILASKLFSDGSFGDILFLSGSESTNTDLRLGEYEGSHIHMEGREVFKHAVRAMEGAVNTIMEEVGVSPHEIKLLIPHQANIRIIKNLGERLGLSSEQVFVNIANYGNTSAASVPIALDEAVRGGKIESGDLVLLCSFGGGFTWGASLIRW.

Catalysis depends on residues cysteine 112 and histidine 251. Residues 252–256 (QANIR) are ACP-binding. Asparagine 281 is an active-site residue.

Belongs to the thiolase-like superfamily. FabH family. Homodimer.

It localises to the cytoplasm. The enzyme catalyses malonyl-[ACP] + acetyl-CoA + H(+) = 3-oxobutanoyl-[ACP] + CO2 + CoA. The protein operates within lipid metabolism; fatty acid biosynthesis. Functionally, catalyzes the condensation reaction of fatty acid synthesis by the addition to an acyl acceptor of two carbons from malonyl-ACP. Catalyzes the first condensation reaction which initiates fatty acid synthesis and may therefore play a role in governing the total rate of fatty acid production. Possesses both acetoacetyl-ACP synthase and acetyl transacylase activities. Its substrate specificity determines the biosynthesis of branched-chain and/or straight-chain of fatty acids. The chain is Beta-ketoacyl-[acyl-carrier-protein] synthase III from Desulfotalea psychrophila (strain LSv54 / DSM 12343).